Reading from the N-terminus, the 184-residue chain is Protein C8 (184 aa).

Residues M1–E21 form the signal peptide.

It belongs to the poxviridae C8 protein family.

This Vaccinia virus (strain Copenhagen) (VACV) protein is Protein C8.